Reading from the N-terminus, the 189-residue chain is Protein GrpE (189 aa).

The segment at 1–24 is disordered; the sequence is MADEQNLDTQNPEAQAAENAAPSD. The span at 10–24 shows a compositional bias: low complexity; that stretch reads QNPEAQAAENAAPSD.

Belongs to the GrpE family. In terms of assembly, homodimer.

The protein localises to the cytoplasm. Functionally, participates actively in the response to hyperosmotic and heat shock by preventing the aggregation of stress-denatured proteins, in association with DnaK and GrpE. It is the nucleotide exchange factor for DnaK and may function as a thermosensor. Unfolded proteins bind initially to DnaJ; upon interaction with the DnaJ-bound protein, DnaK hydrolyzes its bound ATP, resulting in the formation of a stable complex. GrpE releases ADP from DnaK; ATP binding to DnaK triggers the release of the substrate protein, thus completing the reaction cycle. Several rounds of ATP-dependent interactions between DnaJ, DnaK and GrpE are required for fully efficient folding. In Ectopseudomonas mendocina (strain ymp) (Pseudomonas mendocina), this protein is Protein GrpE.